Consider the following 89-residue polypeptide: MKKLVLKSIDFYRKHISPATPPKCIYLPTCSSYTYEAVEKFGVFKGLYLGFRRFIRCNPLHKGGYDPVPEKFSFFVHKQGKNKQHRRSV.

Belongs to the UPF0161 family.

The protein localises to the cell inner membrane. Its function is as follows. Could be involved in insertion of integral membrane proteins into the membrane. This Petrotoga mobilis (strain DSM 10674 / SJ95) protein is Putative membrane protein insertion efficiency factor.